Here is a 551-residue protein sequence, read N- to C-terminus: Hydroxylamine reductase (551 aa).

[2Fe-2S] cluster is bound by residues C3, C6, C18, and C25. Residues H249, E273, C317, C405, C433, C458, E492, and K494 each contribute to the hybrid [4Fe-2O-2S] cluster site. Residue C405 is modified to Cysteine persulfide.

It belongs to the HCP family. [2Fe-2S] cluster serves as cofactor. It depends on hybrid [4Fe-2O-2S] cluster as a cofactor.

It localises to the cytoplasm. The catalysed reaction is A + NH4(+) + H2O = hydroxylamine + AH2 + H(+). In terms of biological role, catalyzes the reduction of hydroxylamine to form NH(3) and H(2)O. This chain is Hydroxylamine reductase, found in Edwardsiella ictaluri (strain 93-146).